The chain runs to 321 residues: uncharacterized protein (321 aa).

The protein belongs to the NAD(P)-dependent epimerase/dehydratase family.

This is an uncharacterized protein from Staphylococcus aureus (strain bovine RF122 / ET3-1).